Consider the following 147-residue polypeptide: Ponticulin-like protein C1 (147 aa).

The first 20 residues, 1 to 20 (MKFTKSLLLLIVAVFASSNA), serve as a signal peptide directing secretion. Asn118 carries the GPI-like-anchor amidated asparagine lipid modification. A glycan (N-linked (GlcNAc...) asparagine) is linked at Asn118. A propeptide spans 119-147 (SSESDSSDSTRIGASFALAASVLLSMLAI) (removed in mature form).

The protein belongs to the ponticulin family. In terms of processing, the GPI-like-anchor contains a phosphoceramide group, rather than a phosphatidyl group.

It is found in the cell membrane. This Dictyostelium discoideum (Social amoeba) protein is Ponticulin-like protein C1 (ponC1).